Reading from the N-terminus, the 237-residue chain is Phosphoserine phosphatase (237 aa).

Asp30 acts as the Nucleophile in catalysis. Asp30 and Asp32 together coordinate Mg(2+). Asp32 (proton donor) is an active-site residue. Substrate is bound by residues Glu39, Arg76, Ser120–Gly121, and Lys169. Asp192 is a Mg(2+) binding site. Asn195 contacts substrate.

It belongs to the HAD-like hydrolase superfamily. SerB family. Requires Mg(2+) as cofactor.

It catalyses the reaction O-phospho-L-serine + H2O = L-serine + phosphate. The enzyme catalyses O-phospho-D-serine + H2O = D-serine + phosphate. Its pathway is amino-acid biosynthesis; L-serine biosynthesis; L-serine from 3-phospho-D-glycerate: step 3/3. Its function is as follows. Catalyzes the dephosphorylation of phosphoserine (P-Ser) in vitro. Also catalyzes the dephosphorylation of phosphothreonine (P-Thr) in vitro. This is Phosphoserine phosphatase from Albidiferax ferrireducens (strain ATCC BAA-621 / DSM 15236 / T118) (Rhodoferax ferrireducens).